We begin with the raw amino-acid sequence, 132 residues long: Fumarate reductase subunit C (132 aa).

Helical transmembrane passes span 36 to 56 (AIPT…LGSL), 70 to 90 (IVII…VTYY), and 110 to 130 (IITM…LVFM).

Belongs to the FrdC family. Part of an enzyme complex containing four subunits: a flavoprotein (FrdA), an iron-sulfur protein (FrdB), and two hydrophobic anchor proteins (FrdC and FrdD).

The protein localises to the cell inner membrane. Functionally, anchors the catalytic components of the fumarate reductase complex to the cell membrane, binds quinones. This is Fumarate reductase subunit C from Pasteurella multocida (strain Pm70).